A 514-amino-acid polypeptide reads, in one-letter code: uncharacterized protein (514 aa).

This is an uncharacterized protein from Caenorhabditis elegans.